The primary structure comprises 612 residues: Protein brambleberry (612 aa).

The first 20 residues, 1 to 20 (MALWFVLLWVSSLQYAEVEA), serve as a signal peptide directing secretion. A run of 2 helical transmembrane segments spans residues 364–384 (LWTC…LSFL) and 417–437 (LTLL…LLWA). 2 disordered regions span residues 452 to 476 (LSIY…PASS) and 555 to 574 (NRSR…SFSG). Over residues 457–470 (PKEKTPEKQHEFGE) the composition is skewed to basic and acidic residues. Over residues 556-574 (RSRSSSPNQSLASSSSFSG) the composition is skewed to low complexity.

It is found in the nucleus membrane. Functionally, required for nuclear membrane fusion during karyogamy. This chain is Protein brambleberry (bmb), found in Danio rerio (Zebrafish).